A 393-amino-acid polypeptide reads, in one-letter code: Putative bacilysin exporter BacE (393 aa).

10 helical membrane-spanning segments follow: residues 11 to 31 (LLFG…ALLI), 43 to 63 (SGVI…GVLV), 69 to 89 (VKIM…LTFL), 92 to 112 (GEYP…GVFF), 133 to 155 (LFAK…FLLG), 160 to 177 (LAVA…FFIS), 215 to 235 (MFTM…FPIV), 244 to 264 (IGNF…AALV), 287 to 307 (ALFL…LFFI), and 353 to 373 (IVDA…LFLH).

It belongs to the major facilitator superfamily.

The protein localises to the cell membrane. Functionally, part of the bacilysin biosynthesis operon. May be involved in self-resistance to bacilysin by permitting efflux of this antibiotic. This chain is Putative bacilysin exporter BacE (bacE), found in Bacillus amyloliquefaciens (Bacillus velezensis).